A 179-amino-acid chain; its full sequence is 3-hydroxyanthranilate 3,4-dioxygenase 2 (179 aa).

Residue arginine 44 participates in O2 binding. 3 residues coordinate Fe cation: histidine 48, glutamate 60, and histidine 99. Glutamate 60 serves as a coordination point for substrate. Arginine 103 and glutamate 113 together coordinate substrate.

Belongs to the 3-HAO family. Fe(2+) serves as cofactor.

The protein resides in the cytoplasm. The enzyme catalyses 3-hydroxyanthranilate + O2 = (2Z,4Z)-2-amino-3-carboxymuconate 6-semialdehyde. Its pathway is cofactor biosynthesis; NAD(+) biosynthesis; quinolinate from L-kynurenine: step 3/3. Its function is as follows. Catalyzes the oxidative ring opening of 3-hydroxyanthranilate to 2-amino-3-carboxymuconate semialdehyde, which spontaneously cyclizes to quinolinate. In Aspergillus oryzae (strain ATCC 42149 / RIB 40) (Yellow koji mold), this protein is 3-hydroxyanthranilate 3,4-dioxygenase 2 (bna1-2).